We begin with the raw amino-acid sequence, 594 residues long: Probable pectinesterase/pectinesterase inhibitor 33 (594 aa).

Positions 1 to 22 (MLRGIFHICLLASFLLLPFSSA) are cleaved as a signal peptide. A disordered region spans residues 28–75 (FTGGTDAPPPWDHNVSPPPETAPSPTPTSSPSTTSPPSPGPVAAPSPI). Positions 34–71 (APPPWDHNVSPPPETAPSPTPTSSPSTTSPPSPGPVAA) are enriched in pro residues. Asn-77, Asn-170, Asn-213, and Asn-226 each carry an N-linked (GlcNAc...) asparagine glycan. Positions 78-237 (GSVSGDMTWW…SDLIGNCLAV (160 aa)) are pectinesterase inhibitor 33. Residues 280–581 (HLVVAQDRSG…TVGSLIAGGS (302 aa)) form a pectinesterase 33 region. Residues Thr-356 and Gln-386 each coordinate substrate. The Proton donor; for pectinesterase activity role is filled by Asp-409. A disulfide bridge connects residues Cys-423 and Cys-443. Asp-430 functions as the Nucleophile; for pectinesterase activity in the catalytic mechanism. Substrate-binding residues include Arg-498 and Trp-500.

In the N-terminal section; belongs to the PMEI family. The protein in the C-terminal section; belongs to the pectinesterase family. Expressed in siliques.

The protein resides in the secreted. It localises to the cell wall. It carries out the reaction [(1-&gt;4)-alpha-D-galacturonosyl methyl ester](n) + n H2O = [(1-&gt;4)-alpha-D-galacturonosyl](n) + n methanol + n H(+). It participates in glycan metabolism; pectin degradation; 2-dehydro-3-deoxy-D-gluconate from pectin: step 1/5. Functionally, acts in the modification of cell walls via demethylesterification of cell wall pectin. The polypeptide is Probable pectinesterase/pectinesterase inhibitor 33 (PME33) (Arabidopsis thaliana (Mouse-ear cress)).